The primary structure comprises 346 residues: Transposase for insertion sequence element IS1533 (346 aa).

The protein belongs to the transposase IS1111A/IS1328/IS1533 family.

Its function is as follows. Required for the transposition of the insertion element. The protein is Transposase for insertion sequence element IS1533 (tnhA) of Leptospira borgpetersenii.